A 283-amino-acid polypeptide reads, in one-letter code: Pantothenate synthetase 2 (283 aa).

An ATP-binding site is contributed by 34–41 (MGALHDGH). Residue His41 is the Proton donor of the active site. Gln65 contributes to the (R)-pantoate binding site. A beta-alanine-binding site is contributed by Gln65. 152–155 (GEKD) is an ATP binding site. Gln158 contacts (R)-pantoate. Residues Val181 and 189 to 192 (MSSR) each bind ATP.

The protein belongs to the pantothenate synthetase family. In terms of assembly, homodimer.

It is found in the cytoplasm. It catalyses the reaction (R)-pantoate + beta-alanine + ATP = (R)-pantothenate + AMP + diphosphate + H(+). Its pathway is cofactor biosynthesis; (R)-pantothenate biosynthesis; (R)-pantothenate from (R)-pantoate and beta-alanine: step 1/1. Catalyzes the condensation of pantoate with beta-alanine in an ATP-dependent reaction via a pantoyl-adenylate intermediate. This is Pantothenate synthetase 2 from Bradyrhizobium diazoefficiens (strain JCM 10833 / BCRC 13528 / IAM 13628 / NBRC 14792 / USDA 110).